Here is a 191-residue protein sequence, read N- to C-terminus: GDP-mannose pyrophosphatase (191 aa).

Residues Tyr-17, 38 to 40, Arg-67, and 85 to 87 contribute to the GDP-alpha-D-mannose site; these read KRE and AGL. The 138-residue stretch at 43-180 folds into the Nudix hydrolase domain; it reads DRGNGATILL…EIRDGKTVLL (138 aa). Residues Ala-85, Glu-100, and Glu-104 each coordinate Mg(2+). A Nudix box motif is present at residues 86-106; sequence GLLDNDEPEACIRKEAIEETG. GDP-alpha-D-mannose contacts are provided by residues Glu-104, Glu-127, 150–151, and Lys-176; that span reads DE. Residue Glu-151 coordinates Mg(2+).

It belongs to the Nudix hydrolase family. NudK subfamily. Homodimer. Mg(2+) is required as a cofactor.

The catalysed reaction is GDP-alpha-D-mannose + H2O = alpha-D-mannose 1-phosphate + GMP + 2 H(+). Functionally, nucleoside diphosphate sugar hydrolase that hydrolyzes GDP-mannose as its preferred substrate, yielding GMP and mannose-1-phosphate. In Citrobacter koseri (strain ATCC BAA-895 / CDC 4225-83 / SGSC4696), this protein is GDP-mannose pyrophosphatase (nudK).